The sequence spans 164 residues: UPF0114 protein BCI_0033 (164 aa).

Transmembrane regions (helical) follow at residues 15-35 (LLFPVYIGLSFGFILLTLKFF), 53-73 (LILIVLSMIDIALVGGLLVMV), and 136-156 (IMWCVIIHLAFVLSAFGMAYI).

It belongs to the UPF0114 family.

It is found in the cell membrane. This Baumannia cicadellinicola subsp. Homalodisca coagulata protein is UPF0114 protein BCI_0033.